The chain runs to 590 residues: Leucine-rich repeat transmembrane neuronal protein 4 (590 aa).

The signal sequence occupies residues 1–30 (MGFRLITQLKGMSVFLVLFPTLLLVMLTGA). Positions 31–61 (QRACPKNCRCDGKIVYCESHAFADIPENISG) constitute an LRRNT domain. Residues 31–424 (QRACPKNCRC…HEYEHVSFHK (394 aa)) lie on the Extracellular side of the membrane. Residue Asn-58 is glycosylated (N-linked (GlcNAc...) asparagine). LRR repeat units follow at residues 62–83 (GSQG…QFAG), 86–107 (QLIW…AFQG), 110–131 (RLKE…TFHP), 134–155 (NLRN…QFKG), 158–179 (KLII…VFQD), 182–203 (NLDF…AFAG), 206–226 (KLKE…AHFP), 230–251 (NLRS…LTWT), 254–275 (SLHT…TFKC), and 278–299 (NLQK…TVNA). A glycan (N-linked (GlcNAc...) asparagine) is linked at Asn-126. An N-linked (GlcNAc...) asparagine glycan is attached at Asn-291. One can recognise an LRRCT domain in the interval 311 to 362 (NMWECSRSICPLFYWLKNFKGNKESTMICAGPKHIQGEKVSDAVETYNICSD). Residues 425-445 (IIAGSVALFLSVAMILLVIYV) traverse the membrane as a helical segment. Residues 446–590 (SWKRYPASMK…PAIYLERITN (145 aa)) are Cytoplasmic-facing.

This sequence belongs to the LRRTM family. In terms of assembly, peripherally associated with AMPAR complex. AMPAR complex consists of an inner core made of 4 pore-forming GluA/GRIA proteins (GRIA1, GRIA2, GRIA3 and GRIA4) and 4 major auxiliary subunits arranged in a twofold symmetry. One of the two pairs of distinct binding sites is occupied either by CNIH2, CNIH3 or CACNG2, CACNG3. The other harbors CACNG2, CACNG3, CACNG4, CACNG8 or GSG1L. This inner core of AMPAR complex is complemented by outer core constituents binding directly to the GluA/GRIA proteins at sites distinct from the interaction sites of the inner core constituents. Outer core constituents include at least PRRT1, PRRT2, CKAMP44/SHISA9, FRRS1L and NRN1. The proteins of the inner and outer core serve as a platform for other, more peripherally associated AMPAR constituents, including LRRTM4. Alone or in combination, these auxiliary subunits control the gating and pharmacology of the AMPAR complex and profoundly impact their biogenesis and protein processing. Predominantly in the brain (at protein level). Also expressed in the cerebellum and other tissues.

It localises to the cell membrane. The protein resides in the postsynaptic cell membrane. In terms of biological role, may play a role in the development and maintenance of the vertebrate nervous system. Exhibits strong synaptogenic activity, restricted to excitatory presynaptic differentiation. In Mus musculus (Mouse), this protein is Leucine-rich repeat transmembrane neuronal protein 4 (Lrrtm4).